The sequence spans 183 residues: Non-classical export protein 2 homolog (183 aa).

The Cytoplasmic portion of the chain corresponds to Met1–Gly8. The chain crosses the membrane as a helical span at residues Val9–Ala29. Over Ser30–Lys44 the chain is Extracellular. Residues Ile45–Gly65 traverse the membrane as a helical segment. Topologically, residues Arg66–Pro75 are cytoplasmic. A helical membrane pass occupies residues Trp76 to Ile96. Over Ala97 to Cys131 the chain is Extracellular. The helical transmembrane segment at Phe132–Ala152 threads the bilayer. Over Lys153 to Val183 the chain is Cytoplasmic. A disordered region spans residues Gly163 to Val183.

This sequence belongs to the NCE102 family.

The protein resides in the cytoplasm. Its subcellular location is the golgi apparatus membrane. It localises to the cell membrane. Its function is as follows. Involved in membrane organization and might act as a sensor of sphingolipids that regulates plasma membrane function. Involved in a novel pathway of export of proteins that lack a cleavable signal sequence. This chain is Non-classical export protein 2 homolog (fhn1), found in Schizosaccharomyces pombe (strain 972 / ATCC 24843) (Fission yeast).